Consider the following 613-residue polypeptide: Proline--tRNA ligase (613 aa).

The protein belongs to the class-II aminoacyl-tRNA synthetase family. ProS type 1 subfamily. In terms of assembly, homodimer.

Its subcellular location is the cytoplasm. The enzyme catalyses tRNA(Pro) + L-proline + ATP = L-prolyl-tRNA(Pro) + AMP + diphosphate. Its function is as follows. Catalyzes the attachment of proline to tRNA(Pro) in a two-step reaction: proline is first activated by ATP to form Pro-AMP and then transferred to the acceptor end of tRNA(Pro). As ProRS can inadvertently accommodate and process non-cognate amino acids such as alanine and cysteine, to avoid such errors it has two additional distinct editing activities against alanine. One activity is designated as 'pretransfer' editing and involves the tRNA(Pro)-independent hydrolysis of activated Ala-AMP. The other activity is designated 'posttransfer' editing and involves deacylation of mischarged Ala-tRNA(Pro). The misacylated Cys-tRNA(Pro) is not edited by ProRS. This chain is Proline--tRNA ligase, found in Tropheryma whipplei (strain Twist) (Whipple's bacillus).